The following is a 211-amino-acid chain: Adenylate kinase (211 aa).

10–15 (GSGKGT) contributes to the ATP binding site. Residues 30–59 (STGDLFRENILNSTALGQEIKKIVERGELV) are NMP. Residues threonine 31, arginine 36, 57–59 (ELV), 85–88 (GFPR), and glutamine 92 contribute to the AMP site. The tract at residues 121–158 (GRRICKSCNNIFNIYTLTTKKNGICDVCGGDLYQREDD) is LID. ATP is bound at residue arginine 122. Zn(2+)-binding residues include cysteine 125 and cysteine 128. Residue 131-132 (IF) coordinates ATP. 2 residues coordinate Zn(2+): cysteine 145 and cysteine 148. 2 residues coordinate AMP: arginine 155 and arginine 166. Valine 194 is an ATP binding site.

This sequence belongs to the adenylate kinase family. In terms of assembly, monomer.

The protein localises to the cytoplasm. The enzyme catalyses AMP + ATP = 2 ADP. It participates in purine metabolism; AMP biosynthesis via salvage pathway; AMP from ADP: step 1/1. Functionally, catalyzes the reversible transfer of the terminal phosphate group between ATP and AMP. Plays an important role in cellular energy homeostasis and in adenine nucleotide metabolism. This chain is Adenylate kinase, found in Borreliella burgdorferi (strain ATCC 35210 / DSM 4680 / CIP 102532 / B31) (Borrelia burgdorferi).